Here is a 465-residue protein sequence, read N- to C-terminus: 5'-adenylylsulfate reductase 1, chloroplastic (465 aa).

The transit peptide at 1-53 directs the protein to the chloroplast; the sequence is MAMSVNVSSSSSSGIINSRFGVSLEPKVSQIGSLRLLDRVHVAPVSLNLSGKR. A reductase domain region spans residues 73–327; the sequence is LAATMVAEIA…KAKECGLHKG (255 aa). In terms of domain architecture, Thioredoxin spans 344–465; the sequence is SAVADIFKSE…SLTSFLNLVR (122 aa). Residues Cys385 and Cys388 each act as nucleophile in the active site. An intrachain disulfide couples Cys385 to Cys388.

This sequence belongs to the APS reductase family. Requires [4Fe-4S] cluster as cofactor. As to expression, leaves, roots and stem.

The protein localises to the plastid. It is found in the chloroplast. The enzyme catalyses glutathione disulfide + sulfite + AMP + 2 H(+) = adenosine 5'-phosphosulfate + 2 glutathione. Its activity is regulated as follows. Stimulated by sodium sulfate &gt; ammonium sulfate and is sensitive to inactivation by 5'AMP. Reduces sulfate for Cys biosynthesis. Substrate preference is adenosine-5'-phosphosulfate (APS) &gt;&gt; 3'-phosphoadenosine-5'-phosphosulfate (PAPS). Uses glutathione or DTT as source of protons. This is 5'-adenylylsulfate reductase 1, chloroplastic (APR1) from Arabidopsis thaliana (Mouse-ear cress).